Consider the following 502-residue polypeptide: ATP synthase subunit beta, chloroplastic (502 aa).

Ser17 carries the post-translational modification Phosphoserine. 176-183 (GGAGVGKT) serves as a coordination point for ATP.

This sequence belongs to the ATPase alpha/beta chains family. F-type ATPases have 2 components, CF(1) - the catalytic core - and CF(0) - the membrane proton channel. CF(1) has five subunits: alpha(3), beta(3), gamma(1), delta(1), epsilon(1). CF(0) has four main subunits: a(1), b(1), b'(1) and c(9-12).

It localises to the plastid. The protein resides in the chloroplast thylakoid membrane. The catalysed reaction is ATP + H2O + 4 H(+)(in) = ADP + phosphate + 5 H(+)(out). In terms of biological role, produces ATP from ADP in the presence of a proton gradient across the membrane. The catalytic sites are hosted primarily by the beta subunits. This chain is ATP synthase subunit beta, chloroplastic, found in Lepidium virginicum (Virginia pepperweed).